Here is a 397-residue protein sequence, read N- to C-terminus: Beta sliding clamp (397 aa).

Belongs to the beta sliding clamp family. As to quaternary structure, forms a ring-shaped head-to-tail homodimer around DNA which binds and tethers DNA polymerases and other proteins to the DNA. The DNA replisome complex has a single clamp-loading complex (3 tau and 1 each of delta, delta', psi and chi subunits) which binds 3 Pol III cores (1 core on the leading strand and 2 on the lagging strand) each with a beta sliding clamp dimer. Additional proteins in the replisome are other copies of gamma, psi and chi, Ssb, DNA helicase and RNA primase.

It localises to the cytoplasm. In terms of biological role, confers DNA tethering and processivity to DNA polymerases and other proteins. Acts as a clamp, forming a ring around DNA (a reaction catalyzed by the clamp-loading complex) which diffuses in an ATP-independent manner freely and bidirectionally along dsDNA. Initially characterized for its ability to contact the catalytic subunit of DNA polymerase III (Pol III), a complex, multichain enzyme responsible for most of the replicative synthesis in bacteria; Pol III exhibits 3'-5' exonuclease proofreading activity. The beta chain is required for initiation of replication as well as for processivity of DNA replication. This Mycolicibacterium smegmatis (strain ATCC 700084 / mc(2)155) (Mycobacterium smegmatis) protein is Beta sliding clamp (dnaN).